The sequence spans 414 residues: Serine--tRNA ligase (414 aa).

230-232 (TAE) lines the L-serine pocket. 261–263 (RKE) lines the ATP pocket. Position 284 (Glu-284) interacts with L-serine. Residue 348 to 351 (EISS) participates in ATP binding. L-serine is bound at residue Ser-382.

Belongs to the class-II aminoacyl-tRNA synthetase family. Type-1 seryl-tRNA synthetase subfamily. In terms of assembly, homodimer. The tRNA molecule binds across the dimer.

It is found in the cytoplasm. It catalyses the reaction tRNA(Ser) + L-serine + ATP = L-seryl-tRNA(Ser) + AMP + diphosphate + H(+). The catalysed reaction is tRNA(Sec) + L-serine + ATP = L-seryl-tRNA(Sec) + AMP + diphosphate + H(+). The protein operates within aminoacyl-tRNA biosynthesis; selenocysteinyl-tRNA(Sec) biosynthesis; L-seryl-tRNA(Sec) from L-serine and tRNA(Sec): step 1/1. Its function is as follows. Catalyzes the attachment of serine to tRNA(Ser). Is also able to aminoacylate tRNA(Sec) with serine, to form the misacylated tRNA L-seryl-tRNA(Sec), which will be further converted into selenocysteinyl-tRNA(Sec). This is Serine--tRNA ligase from Nitratiruptor sp. (strain SB155-2).